The sequence spans 1013 residues: NHS-like protein 3 (1013 aa).

K17 is subject to Phosphoserine. A disordered region spans residues 20–195 (SAKAESDNRQ…PPGSRDAVRI (176 aa)). Over residues 73–89 (QHQERQKLSKGGWDHGD) the composition is skewed to basic and acidic residues. 2 stretches are compositionally biased toward polar residues: residues 90 to 99 (TQSIQSSQTG) and 106 to 120 (SIYS…SSTA). The residue at position 92 (S92) is a Phosphoserine. Position 108 is a phosphotyrosine (Y108). Residues S136, S143, and S159 each carry the phosphoserine modification. T160 is modified (phosphothreonine). Basic and acidic residues predominate over residues 168–178 (VQKELGLRNNR). At S213 the chain carries Phosphoserine. R318 carries the asymmetric dimethylarginine modification. Residues S320, S325, S328, S336, S337, S339, and S340 each carry the phosphoserine modification. Residues 330-1013 (RSLGRFSSAS…PGSDPQKKLV (684 aa)) are disordered. Low complexity predominate over residues 336–361 (SSASSPRPRSRNASSSSDNWSHSQSS). Residues 362 to 375 (ETIVSDGSTLSSKG) show a composition bias toward polar residues. Phosphoserine is present on residues S398, S402, and S407. The span at 408-427 (TAETSDTASIRSSGQLSGRS) shows a compositional bias: polar residues. 2 stretches are compositionally biased toward low complexity: residues 484-493 (VGAVSCPPSS) and 515-530 (RTLS…SGTP). Phosphothreonine is present on T529. S543 bears the Phosphoserine mark. The span at 564-577 (SVSSSLTSLCSSSS) shows a compositional bias: low complexity. Phosphothreonine is present on T591. Residues 600 to 614 (PPHPKVPAPFSPPPS) are compositionally biased toward pro residues. Position 610 is a phosphoserine (S610). Positions 615–633 (KSKSSNQAAPVLAAPAVAP) are enriched in low complexity. The segment covering 635–657 (QVSTIDTSPASPSMPQTTLTPAQ) has biased composition (polar residues). 2 positions are modified to phosphoserine: S667 and S671. 2 stretches are compositionally biased toward pro residues: residues 668–683 (PPPS…PPPT) and 706–716 (PSWPPPPPPAP). Over residues 779-795 (PQKDSVGKHSGAPREDS) the composition is skewed to basic and acidic residues. Residues 814–829 (GASTGIPNPSPGSSAP) show a composition bias toward polar residues. Phosphoserine is present on residues S838, S842, and S848. The segment covering 859–873 (ASSLAASESPASALP) has biased composition (low complexity). Phosphoserine is present on residues S909, S952, and S959. Pro residues predominate over residues 942 to 961 (KAPPPVARKPSVGVPPPSPS). Positions 964 to 975 (RTESLTAPSTNG) are enriched in polar residues.

Functionally, able to directly activate the TNF-NFkappaB signaling pathway. This chain is NHS-like protein 3 (Nhsl3), found in Mus musculus (Mouse).